Consider the following 1364-residue polypeptide: DNA-directed RNA polymerase subunit beta' (1364 aa).

The segment at 1-42 (MTSSSSKSNKSRKSSKAAKDTTPVHESASRPLSKTPPPFRNH) is disordered. Zn(2+)-binding residues include Cys250, Cys317, Cys324, and Cys327.

This sequence belongs to the RNA polymerase beta' chain family. RpoC2 subfamily. As to quaternary structure, in cyanobacteria the RNAP catalytic core is composed of 2 alpha, 1 beta, 1 beta', 1 gamma and 1 omega subunit. When a sigma factor is associated with the core the holoenzyme is formed, which can initiate transcription. Zn(2+) serves as cofactor.

It carries out the reaction RNA(n) + a ribonucleoside 5'-triphosphate = RNA(n+1) + diphosphate. DNA-dependent RNA polymerase catalyzes the transcription of DNA into RNA using the four ribonucleoside triphosphates as substrates. The protein is DNA-directed RNA polymerase subunit beta' of Parasynechococcus marenigrum (strain WH8102).